The primary structure comprises 158 residues: Large ribosomal subunit protein uL30 (158 aa).

This sequence belongs to the universal ribosomal protein uL30 family. Part of the 50S ribosomal subunit.

The sequence is that of Large ribosomal subunit protein uL30 from Sulfurisphaera tokodaii (strain DSM 16993 / JCM 10545 / NBRC 100140 / 7) (Sulfolobus tokodaii).